The primary structure comprises 963 residues: Copalyl diphosphate synthase (963 aa).

A type II terpene cyclase (TC) region spans residues 1 to 539 (MSPMDLQESA…EAYILAALKR (539 aa)). A substrate binding region spans residues 227–292 (ATQWDDECED…FIEKIRSYLH (66 aa)). Mg(2+) is bound by residues Asp311 and Asp314. The short motif at 311–314 (DADD) is the DXDD element. An NSE/DTE motif is present at residues 333-341 (AMLKEFEEE). Residues 337–341 (EFEEE) and 521–522 (VT) contribute to the substrate site. The interval 540 to 659 (AADLPDENAE…SVSVHTDHSD (120 aa)) is linker. The span at 627 to 648 (TNGHYVNGTNHETPLTNGISNG) shows a compositional bias: polar residues. Residues 627-657 (TNGHYVNGTNHETPLTNGISNGDSVSVHTDH) form a disordered region. The interval 660 to 963 (SYYQRSDWTA…KILARMSLEL (304 aa)) is geranylfarnesyl diphosphate synthase (PT). Isopentenyl diphosphate-binding residues include Lys688, Arg691, and His720. 2 residues coordinate Mg(2+): Asp727 and Asp731. The short motif at 727-731 (DDIQD) is the DDXXD 1 element. Arg736 serves as a coordination point for dimethylallyl diphosphate. Position 737 (Arg737) interacts with isopentenyl diphosphate. 6 residues coordinate dimethylallyl diphosphate: Lys814, Thr815, Gln848, Asn855, Lys865, and Lys875. The DDXXD 2 signature appears at 851-855 (DDYLN).

The protein in the N-terminal section; belongs to the terpene synthase family. It in the C-terminal section; belongs to the FPP/GGPP synthase family. As to quaternary structure, homohexamer. Requires Mg(2+) as cofactor.

The catalysed reaction is isopentenyl diphosphate + (2E,6E)-farnesyl diphosphate = (2E,6E,10E)-geranylgeranyl diphosphate + diphosphate. It catalyses the reaction (2E,6E,10E)-geranylgeranyl diphosphate = (+)-copalyl diphosphate. In terms of biological role, bifunctional terpene synthase that possesses both prenyltransferase and type II terpene cyclase activity, converting isopentenyl diphosphate (IPP) and dimethylallyl diphosphate (DMAPP) into geranylgeranyl diphosphate (GGPP) and further converting GGPP into copalyl diphosphate, respectively. This is Copalyl diphosphate synthase from Talaromyces verruculosus (Penicillium verruculosum).